The chain runs to 82 residues: Small ribosomal subunit protein bS16 (82 aa).

It belongs to the bacterial ribosomal protein bS16 family.

The sequence is that of Small ribosomal subunit protein bS16 from Proteus mirabilis (strain HI4320).